A 471-amino-acid chain; its full sequence is Probable multidrug-efflux transporter MT1670 (471 aa).

A run of 14 helical transmembrane segments spans residues 23-43, 55-75, 91-111, 116-136, 146-166, 174-194, 213-233, 237-257, 279-299, 308-328, 337-357, 366-386, 410-430, and 438-458; these read IVLA…ISLL, LYAW…TTVN, LAVF…QILV, LQGI…NSTL, ALVS…GGLF, WAFG…PVAL, VPVW…VAAL, LVQT…FVVV, IYLT…VPLF, PVAA…GEVA, VIGH…ALGA, VGII…IGIA, AINV…GVVV, and VAAA…GVIA.

Belongs to the major facilitator superfamily.

It is found in the cell membrane. Its function is as follows. Could be involved in fluoroquinolones efflux. The sequence is that of Probable multidrug-efflux transporter MT1670 from Mycobacterium tuberculosis (strain CDC 1551 / Oshkosh).